Reading from the N-terminus, the 409-residue chain is Aspartate aminotransferase, cytoplasmic (409 aa).

Ser2 carries the post-translational modification N-acetylserine. L-aspartate-binding residues include Gly38, Trp138, and Asn191. Residue Lys255 is modified to N6-(pyridoxal phosphate)lysine. Arg383 is an L-aspartate binding site. The residue at position 385 (Ser385) is a Phosphoserine.

It belongs to the class-I pyridoxal-phosphate-dependent aminotransferase family. As to quaternary structure, homodimer. The cofactor is pyridoxal 5'-phosphate.

The protein localises to the cytoplasm. The enzyme catalyses L-aspartate + 2-oxoglutarate = oxaloacetate + L-glutamate. Its function is as follows. Plays a key role in amino acid metabolism. The chain is Aspartate aminotransferase, cytoplasmic from Schizosaccharomyces pombe (strain 972 / ATCC 24843) (Fission yeast).